Here is a 324-residue protein sequence, read N- to C-terminus: Zinc transporter ZIP1 (324 aa).

The Extracellular portion of the chain corresponds to 1–30 (MGPWGEPELLVWRPEAAASEAPVPMGLEVK). The helical transmembrane segment at 31–51 (LGALVLLLVLTLICSLVPVCV) threads the bilayer. Residues 52 to 68 (LRRPGANPEASASRQKA) lie on the Cytoplasmic side of the membrane. The helical transmembrane segment at 69 to 89 (LSLVSCFAGGVFLATCLLDLL) threads the bilayer. The Extracellular portion of the chain corresponds to 90–104 (PDYLGAIDEALAALH). A helical transmembrane segment spans residues 105-125 (VTLQFPLQEFILAMGFFLVLV). Topologically, residues 126–179 (MEQITLAYKEQSGPPPREETRALLGTVNGGPQHWHDGLGVPQAGGASSAPSALR) are cytoplasmic. A helical membrane pass occupies residues 180 to 200 (ACVLVFSLALHSVFEGLAVGL). The Extracellular portion of the chain corresponds to 201–206 (QRDQAR). The chain crosses the membrane as a helical span at residues 207-227 (AMELCLALLLHKGILAVSLSL). The Cytoplasmic portion of the chain corresponds to 228–237 (RLLQSHLRAQ). The chain crosses the membrane as a helical span at residues 238 to 258 (VVAGCGILFSCMTPLGIGLGT). Over 259–272 (ALAESAGPLHQLAQ) the chain is Extracellular. The helical transmembrane segment at 273–293 (SVLEGMAAGTFLYITFLEILP) threads the bilayer. Over 294–303 (QELATSEQRI) the chain is Cytoplasmic. The helical transmembrane segment at 304-324 (LKVILLLAGFALLTGLLFIQI) threads the bilayer.

This sequence belongs to the ZIP transporter (TC 2.A.5) family.

The protein resides in the cell membrane. It localises to the endoplasmic reticulum membrane. The enzyme catalyses Zn(2+)(in) = Zn(2+)(out). In terms of biological role, transporter for the divalent cation Zn(2+). Mediates the influx of Zn(2+) into cells from extracellular space. The chain is Zinc transporter ZIP1 (SLC39A1) from Bos taurus (Bovine).